The chain runs to 515 residues: Gamma aminobutyrate transaminase 1, mitochondrial (515 aa).

A mitochondrion-targeting transit peptide spans 1 to 57; that stretch reads MAKISRLFGSTVKAAITAQAGFHGKRIPAVSSLQEHIVKSTPARYNSTQACLENDIS. 172–173 contacts pyridoxal 5'-phosphate; it reads GS. Tyr205 contacts substrate. Asp312 is a pyridoxal 5'-phosphate binding site. Lys341 contacts substrate. Lys341 carries the post-translational modification N6-(pyridoxal phosphate)lysine.

The protein belongs to the class-III pyridoxal-phosphate-dependent aminotransferase family. As to expression, expressed in leaves, roots, stems, flowers and fruits.

Its subcellular location is the mitochondrion. It carries out the reaction 4-aminobutanoate + pyruvate = succinate semialdehyde + L-alanine. The enzyme catalyses 4-aminobutanoate + glyoxylate = succinate semialdehyde + glycine. Its function is as follows. Transaminase that degrades gamma-amino butyric acid (GABA) and uses pyruvate or glyoxylate as amino-group acceptor. Cannot use beta-alanine, ornithine, acetylornithine, serine, glycine, asparagine, glutamine, glutamate, valine, leucine, isoleucine, methionine, phenylalanine, histidine, lysine, arginine, aspartate, threonine, tyrosine, tryptophan, proline, or cysteine as amino donors. Acts predominantly in vegetative tissues. In Solanum lycopersicum (Tomato), this protein is Gamma aminobutyrate transaminase 1, mitochondrial (GABA-TP1).